The primary structure comprises 858 residues: Bifunctional uridylyltransferase/uridylyl-removing enzyme (858 aa).

Residues 1-324 (MSASVAEPPP…PATSGVTRVL (324 aa)) form a uridylyltransferase region. The segment at 325–681 (SPGRFVEKQG…ARPSPVGDAL (357 aa)) is uridylyl-removing. The 123-residue stretch at 443–565 (VDQHILMVLR…VGSERRLTAL (123 aa)) folds into the HD domain. 2 consecutive ACT domains span residues 682–761 (QVLV…PEPS) and 790–858 (ILSV…AIAV).

The protein belongs to the GlnD family. It depends on Mg(2+) as a cofactor.

It catalyses the reaction [protein-PII]-L-tyrosine + UTP = [protein-PII]-uridylyl-L-tyrosine + diphosphate. It carries out the reaction [protein-PII]-uridylyl-L-tyrosine + H2O = [protein-PII]-L-tyrosine + UMP + H(+). With respect to regulation, uridylyltransferase (UTase) activity is inhibited by glutamine, while glutamine activates uridylyl-removing (UR) activity. In terms of biological role, modifies, by uridylylation and deuridylylation, the PII regulatory proteins (GlnB and homologs), in response to the nitrogen status of the cell that GlnD senses through the glutamine level. Under low glutamine levels, catalyzes the conversion of the PII proteins and UTP to PII-UMP and PPi, while under higher glutamine levels, GlnD hydrolyzes PII-UMP to PII and UMP (deuridylylation). Thus, controls uridylylation state and activity of the PII proteins, and plays an important role in the regulation of nitrogen assimilation and metabolism. The polypeptide is Bifunctional uridylyltransferase/uridylyl-removing enzyme (Burkholderia mallei (strain NCTC 10247)).